Here is a 78-residue protein sequence, read N- to C-terminus: Small ribosomal subunit protein bS20 (78 aa).

The interval 1–34 (MANIKSNLKRNKQNRARHTVVHSQTSAVKTQIKK) is disordered. Positions 7-20 (NLKRNKQNRARHTV) are enriched in basic residues. Positions 21–34 (VHSQTSAVKTQIKK) are enriched in polar residues.

This sequence belongs to the bacterial ribosomal protein bS20 family.

In terms of biological role, binds directly to 16S ribosomal RNA. In Malacoplasma penetrans (strain HF-2) (Mycoplasma penetrans), this protein is Small ribosomal subunit protein bS20.